The primary structure comprises 283 residues: DNA repair protein RecO (283 aa).

It belongs to the RecO family.

Functionally, involved in DNA repair and RecF pathway recombination. In Gloeothece citriformis (strain PCC 7424) (Cyanothece sp. (strain PCC 7424)), this protein is DNA repair protein RecO.